Here is a 185-residue protein sequence, read N- to C-terminus: Ribosome-recycling factor (185 aa).

This sequence belongs to the RRF family.

The protein resides in the cytoplasm. In terms of biological role, responsible for the release of ribosomes from messenger RNA at the termination of protein biosynthesis. May increase the efficiency of translation by recycling ribosomes from one round of translation to another. The chain is Ribosome-recycling factor from Pelobacter propionicus (strain DSM 2379 / NBRC 103807 / OttBd1).